A 105-amino-acid chain; its full sequence is Co-chaperonin GroES 3 (105 aa).

This sequence belongs to the GroES chaperonin family. As to quaternary structure, heptamer of 7 subunits arranged in a ring. Interacts with the chaperonin GroEL.

Its subcellular location is the cytoplasm. In terms of biological role, together with the chaperonin GroEL, plays an essential role in assisting protein folding. The GroEL-GroES system forms a nano-cage that allows encapsulation of the non-native substrate proteins and provides a physical environment optimized to promote and accelerate protein folding. GroES binds to the apical surface of the GroEL ring, thereby capping the opening of the GroEL channel. In Rhizobium meliloti (strain 1021) (Ensifer meliloti), this protein is Co-chaperonin GroES 3.